Consider the following 180-residue polypeptide: MESWWGLPCLAFLCFLMHARGQRDFDLADALDDPEPTKKPNSDIYPKPKPPYYPQPENPDSGGNIYPRPKPRPQPQPGNSGNSGGYFNDVDRDDGRYPPRPRPRPPAGGGGGGYSSYGNSDNTHGGDHHSTYGNPEGNMVAKIVSPIVSVVVVTLLGAAASYFKLNNRRNCFRTHEPENV.

Residues 1–21 (MESWWGLPCLAFLCFLMHARG) form the signal peptide. Topologically, residues 22–142 (QRDFDLADAL…GNPEGNMVAK (121 aa)) are extracellular. Residues 28-133 (ADALDDPEPT…HGGDHHSTYG (106 aa)) are disordered. Over residues 47-57 (KPKPPYYPQPE) the composition is skewed to pro residues. The chain crosses the membrane as a helical span at residues 143–163 (IVSPIVSVVVVTLLGAAASYF). Residues 164–180 (KLNNRRNCFRTHEPENV) lie on the Cytoplasmic side of the membrane.

Belongs to the CD99 family. In terms of processing, O-glycosylated. As to expression, expressed in erythroid tissues, including thymus, bone marrow and fetal liver, and in several nonerythroid tissues, such as heart, placenta, skeletal muscle, thyroid and trachea, as well as in skin fibroblasts. Expression is low or undetectable in other tissues.

The protein resides in the cell membrane. This is Glycoprotein Xg (XG) from Homo sapiens (Human).